The chain runs to 204 residues: phospholipase A2 inhibitor and Ly6/PLAUR domain-containing protein (204 aa).

An N-terminal signal peptide occupies residues 1–26; the sequence is MRLSRRPETFLLAFVLLCTLLGLGCP. The UPAR/Ly6 domain maps to 27–117; the sequence is LHCEICTAAG…NSAFLSVPLT (91 aa). Intrachain disulfides connect Cys29–Cys53, Cys32–Cys39, Cys46–Cys74, Cys80–Cys101, Cys102–Cys107, Cys126–Cys151, and Cys144–Cys172.

It belongs to the CNF-like-inhibitor family.

It is found in the secreted. The chain is phospholipase A2 inhibitor and Ly6/PLAUR domain-containing protein (PINLYP) from Homo sapiens (Human).